Reading from the N-terminus, the 874-residue chain is Alanine--tRNA ligase (874 aa).

Zn(2+)-binding residues include H563, H567, C665, and H669.

The protein belongs to the class-II aminoacyl-tRNA synthetase family. The cofactor is Zn(2+).

The protein localises to the cytoplasm. It catalyses the reaction tRNA(Ala) + L-alanine + ATP = L-alanyl-tRNA(Ala) + AMP + diphosphate. In terms of biological role, catalyzes the attachment of alanine to tRNA(Ala) in a two-step reaction: alanine is first activated by ATP to form Ala-AMP and then transferred to the acceptor end of tRNA(Ala). Also edits incorrectly charged Ser-tRNA(Ala) and Gly-tRNA(Ala) via its editing domain. The chain is Alanine--tRNA ligase from Haemophilus influenzae (strain PittGG).